The sequence spans 51 residues: Ribosomal protein eL39-like 2 (51 aa).

It belongs to the eukaryotic ribosomal protein eL39 family. Component of a male germ cell-specific 60S large ribosomal subunit (LSU), which contains RPL10L and RPL39L, instead of RPL10 and RPL39 paralogs. The composition of the rest of the complex is similar to classical ribosomes. Testis specific.

It is found in the cytoplasm. In terms of biological role, male germ cell-specific component of the ribosome, which is required for the formation of sperm and male fertility. Replaces the RPL39 paralog in the ribosome of male germ cells. The ribosome is a large ribonucleoprotein complex responsible for the synthesis of proteins in the cell. The male germ cell-specific ribosome displays a ribosomal polypeptide exit tunnel of distinct size and charge states compared with the classical ribosome. It is responsible for regulating the biosynthesis and folding of a subset of male germ-cell-specific proteins that are essential for the formation of sperm. The protein is Ribosomal protein eL39-like 2 of Homo sapiens (Human).